The chain runs to 292 residues: Elongation factor Ts (292 aa).

The involved in Mg(2+) ion dislocation from EF-Tu stretch occupies residues 80 to 83; that stretch reads TDFV.

Belongs to the EF-Ts family.

It localises to the cytoplasm. In terms of biological role, associates with the EF-Tu.GDP complex and induces the exchange of GDP to GTP. It remains bound to the aminoacyl-tRNA.EF-Tu.GTP complex up to the GTP hydrolysis stage on the ribosome. This Cupriavidus taiwanensis (strain DSM 17343 / BCRC 17206 / CCUG 44338 / CIP 107171 / LMG 19424 / R1) (Ralstonia taiwanensis (strain LMG 19424)) protein is Elongation factor Ts.